The following is a 389-amino-acid chain: 8-amino-7-oxononanoate synthase (389 aa).

Position 31 (Arg31) interacts with substrate. 109 to 110 (GY) contacts pyridoxal 5'-phosphate. His134 serves as a coordination point for substrate. Residues Ser180, 205 to 208 (DEAH), and 236 to 239 (TLSK) contribute to the pyridoxal 5'-phosphate site. Lys239 is subject to N6-(pyridoxal phosphate)lysine. Thr349 provides a ligand contact to substrate.

It belongs to the class-II pyridoxal-phosphate-dependent aminotransferase family. BioF subfamily. As to quaternary structure, homodimer. The cofactor is pyridoxal 5'-phosphate.

It carries out the reaction 6-carboxyhexanoyl-[ACP] + L-alanine + H(+) = (8S)-8-amino-7-oxononanoate + holo-[ACP] + CO2. The protein operates within cofactor biosynthesis; biotin biosynthesis. Catalyzes the decarboxylative condensation of pimeloyl-[acyl-carrier protein] and L-alanine to produce 8-amino-7-oxononanoate (AON), [acyl-carrier protein], and carbon dioxide. This chain is 8-amino-7-oxononanoate synthase, found in Mycobacterium marinum (strain ATCC BAA-535 / M).